The primary structure comprises 297 residues: Ribosomal RNA small subunit methyltransferase A (297 aa).

N31, L33, G58, E79, D104, and N129 together coordinate S-adenosyl-L-methionine.

The protein belongs to the class I-like SAM-binding methyltransferase superfamily. rRNA adenine N(6)-methyltransferase family. RsmA subfamily.

It is found in the cytoplasm. It catalyses the reaction adenosine(1518)/adenosine(1519) in 16S rRNA + 4 S-adenosyl-L-methionine = N(6)-dimethyladenosine(1518)/N(6)-dimethyladenosine(1519) in 16S rRNA + 4 S-adenosyl-L-homocysteine + 4 H(+). Its function is as follows. Specifically dimethylates two adjacent adenosines (A1518 and A1519) in the loop of a conserved hairpin near the 3'-end of 16S rRNA in the 30S particle. May play a critical role in biogenesis of 30S subunits. This Staphylococcus aureus (strain Newman) protein is Ribosomal RNA small subunit methyltransferase A.